Reading from the N-terminus, the 292-residue chain is 4-diphosphocytidyl-2-C-methyl-D-erythritol kinase (292 aa).

Lysine 20 is an active-site residue. 103-113 provides a ligand contact to ATP; sequence PMGGGIGGGSS. Aspartate 145 is an active-site residue.

It belongs to the GHMP kinase family. IspE subfamily.

The catalysed reaction is 4-CDP-2-C-methyl-D-erythritol + ATP = 4-CDP-2-C-methyl-D-erythritol 2-phosphate + ADP + H(+). It participates in isoprenoid biosynthesis; isopentenyl diphosphate biosynthesis via DXP pathway; isopentenyl diphosphate from 1-deoxy-D-xylulose 5-phosphate: step 3/6. Its function is as follows. Catalyzes the phosphorylation of the position 2 hydroxy group of 4-diphosphocytidyl-2C-methyl-D-erythritol. The sequence is that of 4-diphosphocytidyl-2-C-methyl-D-erythritol kinase from Cupriavidus metallidurans (strain ATCC 43123 / DSM 2839 / NBRC 102507 / CH34) (Ralstonia metallidurans).